The following is a 330-amino-acid chain: Transcription factor TGA5 (330 aa).

Residues 1 to 13 (MGDTSPRTSVSTD) show a composition bias toward polar residues. Residues 1-64 (MGDTSPRTSV…REAARKSRLR (64 aa)) form a disordered region. A compositionally biased stretch (basic and acidic residues) spans 35 to 47 (SSDRSKSKMDQKT). A bZIP domain is found at 44 to 107 (DQKTLRRLAQ…SSGDQAHSTA (64 aa)). Coiled coils occupy residues 45-98 (QKTL…FISS) and 211-244 (EQQS…SLAD). A basic motif region spans residues 46–66 (KTLRRLAQNREAARKSRLRKK). The tract at residues 72-86 (LENSRLKLTQLEQEL) is leucine-zipper. Residues 111–327 (AMAFDVEYRR…RALSSLWLAR (217 aa)) enclose the DOG1 domain.

Belongs to the bZIP family. As to quaternary structure, binds DNA as a dimer. Interaction with the Dof domain protein OBP1 enhances the binding to the ocs element. Interacts with NPR1, NPR3 and NPR4. As to expression, predominantly expressed in roots.

Its subcellular location is the nucleus. Its function is as follows. Transcriptional activator that binds specifically to the DNA sequence 5'-TGACG-3'. Recognizes ocs elements like the as-1 motif of the cauliflower mosaic virus 35S promoter. Binding to the as-1-like cis elements mediate auxin- and salicylic acid-inducible transcription. May be involved in the induction of the systemic acquired resistance (SAR) via its interaction with NPR1. Could also bind to the Hex-motif (5'-TGACGTGG-3') another cis-acting element found in plant histone promoters. This Arabidopsis thaliana (Mouse-ear cress) protein is Transcription factor TGA5 (TGA5).